Here is a 327-residue protein sequence, read N- to C-terminus: Asnovolin J 5',6'-dehydrogenase nvfM (327 aa).

The helical transmembrane segment at 9–29 threads the bilayer; the sequence is VAIVGASGVTGGSIVNGLLAL. NADP(+) is bound by residues 13 to 19 and Lys-47; that span reads GASGVTG. The active-site Proton acceptor is the Lys-130.

It belongs to the NmrA-type oxidoreductase family.

The protein localises to the membrane. The catalysed reaction is asnovolin K + AH2 = asnovolin A + A. It carries out the reaction chermesin D methyl ester + AH2 = asnovolin J + A. The protein operates within secondary metabolite biosynthesis; terpenoid biosynthesis. Functionally, asnovolin J 5',6'-dehydrogenase; part of the gene cluster that mediates the biosynthesis of novofumigatonin, a heavily oxygenated meroterpenoid containing a unique orthoester moiety. The first step of the pathway is the synthesis of 3,5-dimethylorsellinic acid (DMOA) by the polyketide synthase nvfA via condensation of one acetyl-CoA starter unit with 3 malonyl-CoA units and 2 methylations. DMOA is then converted to farnesyl-DMOA by the farnesyltransferase nvfB. Epoxydation by FAD-dependent monooxygenase nvfK, followed by a protonation-initiated cyclization catalyzed by the terpene cyclase nvfL leads to the production of asnavolin H. The short chain dehydrogenase nvfC then as a 3-OH dehydrogenase of asnovolin H to yield chemesin D. There are two branches to synthesize asnovolin A from chemesin D. In one branch, chemesin D undergoes Baeyer-Villiger oxidation by nvfH, methylation by nvfJ, and enoyl reduction by the nvfM D enoylreductase that reduces the double bond between C-5'and C-6', to form respectively asnovolin I, asnovolin K, and asnovolin A. In the other branch, the methylation precedes the Baeyer-Villiger oxidation and the enoyl reduction to yield asnovolin A via the asnovolin J intermediate. Asnovolin A is further converted to fumigatonoid A by the Fe(II)/2-oxoglutarate-dependent dioxygenase nvfI that catalyzes an endoperoxidation reaction. The alpha/beta hydrolase nvfD then acts as an epimerase that converts fumigatonoid A to its C-5' epimer, which then undergoes spontaneous or nvfD-catalyzed lactonization. The following step utilizes the ketoreductase nvfG to produce fumigatonoid B. The dioxygenase nvfE further converts fumigatonoid B into fumigatonoid C. Finally the Fe(II)/2-oxoglutarate-dependent dioxygenase nvfF catalyzes two rounds of oxidation to transform fumigatonoid C into the end product, novofumigatonin A. This chain is Asnovolin J 5',6'-dehydrogenase nvfM, found in Aspergillus novofumigatus (strain IBT 16806).